The sequence spans 193 residues: Thymidylate kinase (193 aa).

7–14 is a binding site for ATP; the sequence is GIDGCGKS.

This sequence belongs to the thymidylate kinase family.

The catalysed reaction is dTMP + ATP = dTDP + ADP. In terms of biological role, phosphorylation of dTMP to form dTDP in both de novo and salvage pathways of dTTP synthesis. The polypeptide is Thymidylate kinase (Coprothermobacter proteolyticus (strain ATCC 35245 / DSM 5265 / OCM 4 / BT)).